The primary structure comprises 455 residues: Ribosomal protein uS12 methylthiotransferase RimO (455 aa).

Residues 1–114 enclose the MTTase N-terminal domain; it reads MKYHIVTLGC…INALVGQLER (114 aa). Positions 10, 46, 78, 166, 170, and 173 each coordinate [4Fe-4S] cluster. In terms of domain architecture, Radical SAM core spans 152–383; it reads THQTPSAYLK…MRLQQTISYT (232 aa). The TRAM domain maps to 386–455; that stretch reads QRWVGRTIKV…AYDLWGEALS (70 aa).

Belongs to the methylthiotransferase family. RimO subfamily. Requires [4Fe-4S] cluster as cofactor.

It is found in the cytoplasm. The enzyme catalyses L-aspartate(89)-[ribosomal protein uS12]-hydrogen + (sulfur carrier)-SH + AH2 + 2 S-adenosyl-L-methionine = 3-methylsulfanyl-L-aspartate(89)-[ribosomal protein uS12]-hydrogen + (sulfur carrier)-H + 5'-deoxyadenosine + L-methionine + A + S-adenosyl-L-homocysteine + 2 H(+). Functionally, catalyzes the methylthiolation of an aspartic acid residue of ribosomal protein uS12. This Chloroflexus aurantiacus (strain ATCC 29366 / DSM 635 / J-10-fl) protein is Ribosomal protein uS12 methylthiotransferase RimO.